A 204-amino-acid chain; its full sequence is Large ribosomal subunit protein eL15y (204 aa).

The disordered stretch occupies residues Arg162–Arg204. The span at Asn171–Trp192 shows a compositional bias: basic residues. Positions Lys193–Arg204 are enriched in polar residues.

It belongs to the eukaryotic ribosomal protein eL15 family.

The sequence is that of Large ribosomal subunit protein eL15y (RPL15B) from Arabidopsis thaliana (Mouse-ear cress).